Here is a 162-residue protein sequence, read N- to C-terminus: Cytochrome B pre-mRNA-processing protein 6 (162 aa).

Serine 2 is modified (N-acetylserine). At threonine 97 the chain carries Phosphothreonine.

The protein localises to the mitochondrion. In terms of biological role, this protein is involved in processing of the 5' terminus and the intervening sequences of cytochrome b pre-mRNA. The chain is Cytochrome B pre-mRNA-processing protein 6 (CBP6) from Saccharomyces cerevisiae (strain ATCC 204508 / S288c) (Baker's yeast).